Here is a 90-residue protein sequence, read N- to C-terminus: Molybdopterin synthase sulfur carrier subunit (90 aa).

Position 90 is a 1-thioglycine; alternate (Gly90). Gly90 is subject to Glycyl adenylate; alternate.

The protein belongs to the MoaD family. MOCS2A subfamily. As to quaternary structure, heterotetramer; composed of 2 small (Mocs2A) and 2 large (Mocs2B) subunits. C-terminal thiocarboxylation occurs in 2 steps, it is first acyl-adenylated (-COAMP) via the hesA/moeB/thiF part of MOCS3, then thiocarboxylated (-COSH) via the rhodanese domain of MOCS3.

It is found in the cytoplasm. Its pathway is cofactor biosynthesis; molybdopterin biosynthesis. In terms of biological role, acts as a sulfur carrier required for molybdopterin biosynthesis. Component of the molybdopterin synthase complex that catalyzes the conversion of precursor Z into molybdopterin by mediating the incorporation of 2 sulfur atoms into precursor Z to generate a dithiolene group. In the complex, serves as sulfur donor by being thiocarboxylated (-COSH) at its C-terminus by MOCS3. After interaction with Mocs2B, the sulfur is then transferred to precursor Z to form molybdopterin. Involved during biosynthesis of the molybdenum cofactor. The polypeptide is Molybdopterin synthase sulfur carrier subunit (Drosophila melanogaster (Fruit fly)).